Here is an 84-residue protein sequence, read N- to C-terminus: Small ribosomal subunit protein bS16 (84 aa).

Belongs to the bacterial ribosomal protein bS16 family.

The chain is Small ribosomal subunit protein bS16 from Dechloromonas aromatica (strain RCB).